The sequence spans 517 residues: Serine O-succinyltransferase (517 aa).

Residues 1 to 46 constitute a mitochondrion transit peptide; sequence MSPLNGVARSLPRPFQAVARRPFRVAQPAVACPSNRRSFNHSRSLR. The interval 34–66 is disordered; the sequence is SNRRSFNHSRSLRSTGSQSPAPSPRDSSNPALS. A compositionally biased stretch (polar residues) spans 45–64; sequence LRSTGSQSPAPSPRDSSNPA. The AB hydrolase-1 domain occupies 134–386; it reads NVILLHTGLS…LTQQLATKKQ (253 aa). Residues 141 to 144 are important for substrate specificity; it reads GLSA. Residue Ser238 is the Nucleophile of the active site. Arg307 contributes to the substrate binding site. Positions 413–436 are disordered; the sequence is QPYQEQPSASTSAEQSASASETGS. Residues 416 to 436 are compositionally biased toward low complexity; sequence QEQPSASTSAEQSASASETGS. Active-site residues include Asp461 and His498. Asp499 is a binding site for substrate.

Belongs to the AB hydrolase superfamily. MetX family.

It is found in the mitochondrion. The catalysed reaction is succinyl-CoA + L-serine = O-succinyl-L-serine + CoA. It functions in the pathway amino-acid biosynthesis; L-cysteine biosynthesis; L-cysteine from L-serine: step 1/2. Functionally, transfers a succinyl group from succinyl-CoA to L-serine, forming succinyl-L-serine. Also has weak serine acetyl transferase activity and homoserine succinyl transferase activity. The sequence is that of Serine O-succinyltransferase from Emericella nidulans (Aspergillus nidulans).